The primary structure comprises 288 residues: 4-hydroxy-tetrahydrodipicolinate synthase (288 aa).

T47 contributes to the pyruvate binding site. The active-site Proton donor/acceptor is the Y136. Catalysis depends on K164, which acts as the Schiff-base intermediate with substrate. I204 is a binding site for pyruvate.

The protein belongs to the DapA family. As to quaternary structure, homotetramer; dimer of dimers.

The protein resides in the cytoplasm. It catalyses the reaction L-aspartate 4-semialdehyde + pyruvate = (2S,4S)-4-hydroxy-2,3,4,5-tetrahydrodipicolinate + H2O + H(+). It participates in amino-acid biosynthesis; L-lysine biosynthesis via DAP pathway; (S)-tetrahydrodipicolinate from L-aspartate: step 3/4. In terms of biological role, catalyzes the condensation of (S)-aspartate-beta-semialdehyde [(S)-ASA] and pyruvate to 4-hydroxy-tetrahydrodipicolinate (HTPA). The chain is 4-hydroxy-tetrahydrodipicolinate synthase from Leuconostoc mesenteroides subsp. mesenteroides (strain ATCC 8293 / DSM 20343 / BCRC 11652 / CCM 1803 / JCM 6124 / NCDO 523 / NBRC 100496 / NCIMB 8023 / NCTC 12954 / NRRL B-1118 / 37Y).